The sequence spans 209 residues: NAD(P)H-quinone oxidoreductase subunit I (209 aa).

4Fe-4S ferredoxin-type domains follow at residues 55–84 and 95–124; these read GRIH…VDYE and NSYS…MTEE. [4Fe-4S] cluster contacts are provided by Cys64, Cys67, Cys70, Cys74, Cys104, Cys107, Cys110, and Cys114.

This sequence belongs to the complex I 23 kDa subunit family. As to quaternary structure, NDH-1 is composed of at least 11 different subunits. Requires [4Fe-4S] cluster as cofactor.

The protein localises to the cell inner membrane. The enzyme catalyses a plastoquinone + NADH + (n+1) H(+)(in) = a plastoquinol + NAD(+) + n H(+)(out). The catalysed reaction is a plastoquinone + NADPH + (n+1) H(+)(in) = a plastoquinol + NADP(+) + n H(+)(out). Functionally, NDH-1 shuttles electrons from an unknown electron donor, via FMN and iron-sulfur (Fe-S) centers, to quinones in the respiratory and/or the photosynthetic chain. The immediate electron acceptor for the enzyme in this species is believed to be plastoquinone. Couples the redox reaction to proton translocation, and thus conserves the redox energy in a proton gradient. This chain is NAD(P)H-quinone oxidoreductase subunit I, found in Gloeobacter violaceus (strain ATCC 29082 / PCC 7421).